A 454-amino-acid chain; its full sequence is Probable mitochondrial saccharopine dehydrogenase-like oxidoreductase At5g39410 (454 aa).

Residue methionine 1 is modified to N-acetylmethionine. A disordered region spans residues 215 to 234 (RRSRPRRPRPTICGPPAKGP).

It belongs to the saccharopine dehydrogenase family.

It localises to the mitochondrion membrane. This chain is Probable mitochondrial saccharopine dehydrogenase-like oxidoreductase At5g39410, found in Arabidopsis thaliana (Mouse-ear cress).